Reading from the N-terminus, the 483-residue chain is Regulatory protein ViaA (483 aa).

It belongs to the ViaA family. As to quaternary structure, homodimer. Interacts with RavA.

The protein resides in the cytoplasm. Its function is as follows. Component of the RavA-ViaA chaperone complex, which may act on the membrane to optimize the function of some of the respiratory chains. ViaA stimulates the ATPase activity of RavA. The polypeptide is Regulatory protein ViaA (Cronobacter sakazakii (strain ATCC BAA-894) (Enterobacter sakazakii)).